The sequence spans 440 residues: Tyrosine--tRNA ligase (440 aa).

Tyrosine 46 provides a ligand contact to L-tyrosine. Residues 51-60 carry the 'HIGH' region motif; the sequence is PTAPSLHIGN. Tyrosine 181 and glutamine 185 together coordinate L-tyrosine. The 'KMSKS' region motif lies at 241–245; the sequence is KFGKS. An ATP-binding site is contributed by lysine 244. One can recognise an S4 RNA-binding domain in the interval 373 to 430; it reads DRIAQAGVSAGLFKSISEARKTIKSGGVYVNNVRVEDEEQLLGDGDFLKGRFVVLRRG.

It belongs to the class-I aminoacyl-tRNA synthetase family. TyrS type 1 subfamily. Homodimer.

Its subcellular location is the cytoplasm. The catalysed reaction is tRNA(Tyr) + L-tyrosine + ATP = L-tyrosyl-tRNA(Tyr) + AMP + diphosphate + H(+). In terms of biological role, catalyzes the attachment of tyrosine to tRNA(Tyr) in a two-step reaction: tyrosine is first activated by ATP to form Tyr-AMP and then transferred to the acceptor end of tRNA(Tyr). The protein is Tyrosine--tRNA ligase of Bifidobacterium animalis subsp. lactis (strain AD011).